Reading from the N-terminus, the 692-residue chain is Ena/VASP-like protein (692 aa).

One can recognise a WH1 domain in the interval 1–112 (MSEQSICQAR…NAMLFALNIM (112 aa)). 3 disordered regions span residues 116 to 310 (DGGP…VQKN), 466 to 518 (SAAM…YEES), and 531 to 650 (KLRK…NDVS). Composition is skewed to polar residues over residues 123–132 (RQAQNIQNGP) and 159–169 (STTVSTLQINV). Positions 214–226 (SSKSTNKSSNRTS) are enriched in low complexity. Positions 231–267 (LQNSHCGSEPSTSQSSAFSPIRPSNGTVSRSIKQISL) are enriched in polar residues. Composition is skewed to low complexity over residues 288 to 310 (PSLSFSPCSSSPPVSVTSSVQKN) and 466 to 479 (SAAMVASVGSAPAP). Positions 480 to 506 (ASGPPPPPPPGPPPPSGGTPPPAPPLP) are enriched in pro residues. The segment at 522–542 (GLAAALAGAKLRKVQRPEDGS) is EVH2 block A. Residues 522-689 (GLAAALAGAK…DAIRQELSRI (168 aa)) form an EVH2 region. The KLKR signature appears at 531–534 (KLRK). The segment at 563–580 (GGLMEEMNKLLAKRRKAA) is EVH2 block B. A compositionally biased stretch (polar residues) spans 597-617 (EDASLSSSPVTRGPTPQNSSD). Positions 618-628 (LGKKPWERSNS) are enriched in basic and acidic residues. Residues 655-689 (DFDRMKQEILEEVVRELHKVKEEIIDAIRQELSRI) form an EVH2 block C region.

Belongs to the Ena/VASP family. In terms of tissue distribution, during embryonic and tadpole development, expressed in the cement gland, brain, neural tube, myotome and neural placodes, including the otic, lateral line and olfactory placodes. All isoforms show similar spatial expression patterns.

It is found in the cytoplasm. The protein localises to the cytoskeleton. The protein resides in the stress fiber. Its subcellular location is the cell projection. It localises to the lamellipodium. Functionally, ena/VASP proteins are actin-associated proteins involved in a range of processes dependent on cytoskeleton remodeling and cell polarity such as axon guidance and lamellipodial and filopodial dynamics in migrating cells. Evl enhances actin nucleation and polymerization. The sequence is that of Ena/VASP-like protein from Xenopus laevis (African clawed frog).